A 1385-amino-acid chain; its full sequence is MCAVLEPSMIRWLSEVDNIVVSSLPSDYIPSGPAGVKAESCEVELPGSFGVIDEEDSYIRLLSAFATLVCRMSGESDVAMYSKANRLLKLAVPPGVAFQQLRASVTEAVEGTLALPAVDFDELSALEREKKQLDYYPQYFKVGVVTAADKTKLDQFRYHKFELLLRQVTSSRFEMVYDSERFSPDRIGELGEQLVQFLTLVEAKDDADVYAISLVTSGASRVLPDPTTDLGWGQFRGAIHDIFQHHAETRPDRLCVVETGVGQVAARTFTYSAINCASNIVAHYLLARGIRRGDVVMIYSTRGVDLLVSVLGVLKSGAVFSVIDPAYPPARQNVYLGVAKPAGLIVIQAAGQLDEAVEAFIRDNLSLKARLPALALQTDGAILGGTLPDFHLDTLVPFASLKNTRTDVVVGPDSNPTLSFTSGSEGIPKGVLGRHFSLTYYFDWMAKRFGLSEDDKFTMLSGIAHDPIQRDMFTPIYLGAQLLVPQEDDIGTPGRLATWMATHGATVTHLTPAMGQVLTADATTPFPSLKRAFFVGDVLTKRDCARLQSLAENVAIVNMYGSTETQRAVSYFEVPSCSSNPSYLDNLKSIIPAGRGMHNVQLLIVNRHDRTKLCGIGEVGEIYVRAGGLSEGYRGLPEINKEKFIDNWFVDAGHWGGLDLSGDEPWRNYWLGVRDRLYRTGDLGRYLPNGDCECCGRADDQVKIRGFRIELGEIDTNISQYPLCRENITLLRKDQNGESTLISYLVPRSDQKALASFISAVPESIATESIAGSLIKYHKLINDIRGFLKKRLAGYAIPTLIMVMERLPLNPNGKIDKNKLQFPEPTELDRASEHFASETLGLSSFSPLEQEIRKIWLDLLPTRPAITSSDESFFDLGGTSILATRMAIVLRNRLNISLALSTIFRYPTVKELAKEISRVRGTISDDKSSNSGTTEYYADAKHVSEAELASKYESRLSLLPSGATSAPVYVFLTGVTGFLGCHILADLLNRSRKPYDITVYAHVRASDESSALQRIKSVCTAYGLWKNAYAPRIKVVLGNLAEKQFGLPKKAWHDLQEGIDVIIHNAALVHWVYPYSKLREANVLSTVNVLNLAAAGKAKYFTFVSSTSALDTKHYLELSNAAIESGGSGVPEDDDLMGGSLGLKGGYGQSKWAAEFIIKRAGERGLRGCILRPGYVTGSPSTGASNADDFLLRFLRGCVQLGKIPDIEGTVNMVPVDYVARLATAASFSSSGNTHMMVVNVNAKPRISFRDYLLALKEYGYQVTSVPYDEWSKALESSSDEENPLYPLLYLVLDDLPKKLRSPELDTTNAKFVLEEDFARTNIEPIIITSVSLEVVGSYISFLHKLGFLEEPAKGSRPLPNISLSDEQISLIAAVATARSSTAKP.

Residues 843–920 enclose the Carrier domain; it reads SSFSPLEQEI…ELAKEISRVR (78 aa). Ser880 is modified (O-(pantetheine 4'-phosphoryl)serine).

This sequence belongs to the ATP-dependent AMP-binding enzyme family. As to quaternary structure, heterodimer of an alpha and a beta subunit. Pantetheine 4'-phosphate is required as a cofactor.

It catalyses the reaction (S)-2-amino-6-oxohexanoate + NADP(+) + H2O = L-2-aminoadipate + NADPH + 2 H(+). The catalysed reaction is (S)-2-amino-6-oxohexanoate + NAD(+) + H2O = L-2-aminoadipate + NADH + 2 H(+). It carries out the reaction (S)-2-amino-6-oxohexanoate + AMP + diphosphate + NADP(+) = L-2-aminoadipate + ATP + NADPH + H(+). Its pathway is amino-acid biosynthesis; L-lysine biosynthesis via AAA pathway; L-lysine from L-alpha-aminoadipate (fungal route): step 1/3. Catalyzes the activation of alpha-aminoadipate by ATP-dependent adenylation and the reduction of activated alpha-aminoadipate by NADPH. The activated alpha-aminoadipate is bound to the phosphopantheinyl group of the enzyme itself before it is reduced to (S)-2-amino-6-oxohexanoate. The protein is L-2-aminoadipate reductase large subunit (LYS2) of Eremothecium gossypii (strain ATCC 10895 / CBS 109.51 / FGSC 9923 / NRRL Y-1056) (Yeast).